Reading from the N-terminus, the 177-residue chain is MTLVLILIFIIAWKLGYLKNTLKNWDLKRIFWLMGIVFFTLATNYLVTVLVLKTQIISSVTSDTGMSDILGQLPILCQKYILGIIVPLSEELLFRSYIFGSITNKKVAFLISSVLFALVHTGFSWYLLPYLILSFIITWVYSKRNNFIESAIVHSSVNLFGGSAIKLLDTFFKLLPY.

4 helical membrane-spanning segments follow: residues 2–22 (TLVL…KNTL), 30–50 (IFWL…VTVL), 117–137 (ALVH…SFII), and 152–172 (IVHS…DTFF).

This sequence belongs to the UPF0177 family.

The protein resides in the cell membrane. In Lactococcus lactis subsp. lactis (strain IL1403) (Streptococcus lactis), this protein is UPF0177 protein YxdF (yxdF).